A 360-amino-acid chain; its full sequence is Nucleoporin SEH1 (360 aa).

WD repeat units follow at residues 10-49 (DHKD…DWHC), 55-96 (THSG…SNDK), 111-152 (DSRT…NLSQ), 160-210 (SCKL…RKYA), 217-258 (TVTD…KELT), and 276-315 (NHNS…NWKC). A Glycyl lysine isopeptide (Lys-Gly) (interchain with G-Cter in SUMO2) cross-link involves residue Lys-12. Phosphoserine is present on residues Ser-179 and Ser-190. The span at 324 to 354 (SPVNGSSQQGTSNPSLGSTIPSLQNSLNGSS) shows a compositional bias: polar residues. The segment at 324-360 (SPVNGSSQQGTSNPSLGSTIPSLQNSLNGSSAGRKHS) is disordered.

It belongs to the WD repeat SEC13 family. Component of the Nup107-160 subcomplex of the nuclear pore complex (NPC). The Nup107-160 subcomplex includes NUP160, NUP133, NUP107, NUP98, NUP85, NUP43, NUP37, SEH1 and SEC13. The SEH1 subunit appears to be only weakly associated with the Nup107-160 subcomplex. Component of the GATOR2 subcomplex, composed of MIOS, SEC13, SEH1L, WDR24 and WDR59. The GATOR2 complex interacts with CASTOR1 and CASTOR2; the interaction is negatively regulated by arginine. The GATOR2 complex interacts with SESN1, SESN2 and SESN3; the interaction is negatively regulated by amino acids. SESN1, SESN2 and SESN3 convey leucine availability via direct interaction with SEH1L and WDR24.

The protein localises to the chromosome. The protein resides in the centromere. It localises to the kinetochore. It is found in the nucleus. Its subcellular location is the nuclear pore complex. The protein localises to the lysosome membrane. With respect to regulation, the GATOR2 complex is negatively regulated by the upstream amino acid sensors CASTOR1 and SESN2, which sequester the GATOR2 complex in absence of amino acids. In the presence of abundant amino acids, GATOR2 is released from CASTOR1 and SESN2 and activated. Component of the Nup107-160 subcomplex of the nuclear pore complex (NPC). The Nup107-160 subcomplex is required for the assembly of a functional NPC. The Nup107-160 subcomplex is also required for normal kinetochore microtubule attachment, mitotic progression and chromosome segregation. This subunit plays a role in recruitment of the Nup107-160 subcomplex to the kinetochore. In terms of biological role, as a component of the GATOR2 complex, functions as an activator of the amino acid-sensing branch of the mTORC1 signaling pathway. The GATOR2 complex indirectly activates mTORC1 through the inhibition of the GATOR1 subcomplex. GATOR2 probably acts as an E3 ubiquitin-protein ligase toward GATOR1. In the presence of abundant amino acids, the GATOR2 complex mediates ubiquitination of the NPRL2 core component of the GATOR1 complex, leading to GATOR1 inactivation. In the absence of amino acids, GATOR2 is inhibited, activating the GATOR1 complex. Within the GATOR2 complex, SEC13 and SEH1L are required to stabilize the complex. The protein is Nucleoporin SEH1 (SEH1L) of Homo sapiens (Human).